We begin with the raw amino-acid sequence, 195 residues long: Rubrerythrin-1 (195 aa).

The region spanning 3–150 (SLKGTKTAEN…ALLKNIEENK (148 aa)) is the Ferritin-like diiron domain. 10 residues coordinate Fe(3+): Glu-20, Glu-53, Glu-98, Glu-101, Glu-132, His-135, Cys-162, Cys-165, Cys-178, and Cys-181. The Rubredoxin-like domain occupies 157–191 (VKFWKCIKCGYIFEGKTAPKVCPACLHPQAYFEIL).

In terms of assembly, homodimer. The cofactor is Fe(3+).

It carries out the reaction H2O2 + NADH + H(+) = NAD(+) + 2 H2O. Its activity is regulated as follows. Rubredoxin (Rd) increases the NADH consumption rate by serving as an intermediary electron-transfer shuttle between NROR and RubY. Its function is as follows. Functions as the terminal component of an NADH peroxidase (NADH:H(2)O(2) oxidoreductase) when using NADH:rubredoxin oxidoreductase (NROR) as the electron transport intermediary from NADH to RubY. The chain is Rubrerythrin-1 (rbr1) from Clostridium acetobutylicum (strain ATCC 824 / DSM 792 / JCM 1419 / IAM 19013 / LMG 5710 / NBRC 13948 / NRRL B-527 / VKM B-1787 / 2291 / W).